Reading from the N-terminus, the 187-residue chain is ATP synthase subunit delta, chloroplastic (187 aa).

This sequence belongs to the ATPase delta chain family. In terms of assembly, F-type ATPases have 2 components, F(1) - the catalytic core - and F(0) - the membrane proton channel. F(1) has five subunits: alpha(3), beta(3), gamma(1), delta(1), epsilon(1). CF(0) has four main subunits: a(1), b(1), b'(1) and c(10-14). The alpha and beta chains form an alternating ring which encloses part of the gamma chain. F(1) is attached to F(0) by a central stalk formed by the gamma and epsilon chains, while a peripheral stalk is formed by the delta, b and b' chains.

It localises to the plastid. It is found in the chloroplast thylakoid membrane. Functionally, f(1)F(0) ATP synthase produces ATP from ADP in the presence of a proton or sodium gradient. F-type ATPases consist of two structural domains, F(1) containing the extramembraneous catalytic core and F(0) containing the membrane proton channel, linked together by a central stalk and a peripheral stalk. During catalysis, ATP synthesis in the catalytic domain of F(1) is coupled via a rotary mechanism of the central stalk subunits to proton translocation. This protein is part of the stalk that links CF(0) to CF(1). It either transmits conformational changes from CF(0) to CF(1) or is implicated in proton conduction. The polypeptide is ATP synthase subunit delta, chloroplastic (Trieres chinensis (Marine centric diatom)).